Here is a 285-residue protein sequence, read N- to C-terminus: Putative pyruvate, phosphate dikinase regulatory protein (285 aa).

165-172 lines the ADP pocket; that stretch reads GVSRTSKT.

Belongs to the pyruvate, phosphate/water dikinase regulatory protein family. PDRP subfamily.

It carries out the reaction N(tele)-phospho-L-histidyl/L-threonyl-[pyruvate, phosphate dikinase] + ADP = N(tele)-phospho-L-histidyl/O-phospho-L-threonyl-[pyruvate, phosphate dikinase] + AMP + H(+). The enzyme catalyses N(tele)-phospho-L-histidyl/O-phospho-L-threonyl-[pyruvate, phosphate dikinase] + phosphate + H(+) = N(tele)-phospho-L-histidyl/L-threonyl-[pyruvate, phosphate dikinase] + diphosphate. Its function is as follows. Bifunctional serine/threonine kinase and phosphorylase involved in the regulation of the pyruvate, phosphate dikinase (PPDK) by catalyzing its phosphorylation/dephosphorylation. The chain is Putative pyruvate, phosphate dikinase regulatory protein from Lactobacillus delbrueckii subsp. bulgaricus (strain ATCC BAA-365 / Lb-18).